Consider the following 514-residue polypeptide: Cardiolipin synthase 2 (514 aa).

Helical transmembrane passes span 7-27 (LIFF…FIDV), 41-61 (ILGI…CVIF), and 71-91 (LTWL…YLLF). 2 consecutive PLD phosphodiesterase domains span residues 249 to 276 (INYR…GDEY) and 427 to 454 (EKGF…DMRS). Catalysis depends on residues H254, K256, D261, H432, K434, and D439.

Belongs to the phospholipase D family. Cardiolipin synthase subfamily.

It localises to the cell membrane. It carries out the reaction 2 a 1,2-diacyl-sn-glycero-3-phospho-(1'-sn-glycerol) = a cardiolipin + glycerol. Its function is as follows. Catalyzes the reversible phosphatidyl group transfer from one phosphatidylglycerol molecule to another to form cardiolipin (CL) (diphosphatidylglycerol) and glycerol. This is Cardiolipin synthase 2 (cls2) from Bacillus anthracis.